Here is a 158-residue protein sequence, read N- to C-terminus: C-type lectin galactose-binding isoform (158 aa).

A signal peptide spans 1 to 23 (MGRFLLVTLSLLVMAFFLNGANS). Intrachain disulfides connect cysteine 26/cysteine 37, cysteine 54/cysteine 154, and cysteine 129/cysteine 146. Residues 33 to 155 (RNGFCYKVFN…CTALRPFLCQ (123 aa)) form the C-type lectin domain. 3 residues coordinate Ca(2+): glutamine 119, aspartate 121, and glutamate 127. The Galactose-binding motif lies at 119-121 (QPD). N-linked (GlcNAc...) asparagine glycosylation is present at asparagine 134. 2 residues coordinate Ca(2+): asparagine 142 and aspartate 143.

The protein belongs to the true venom lectin family. In terms of assembly, dimer. Probably disulfide-linked homodimer. As to expression, expressed by the venom gland.

It localises to the secreted. Its function is as follows. Galactose-binding lectin that binds to and agglutinates erythrocytes in a calcium-dependent manner. The protein is C-type lectin galactose-binding isoform of Pseudechis australis (Mulga snake).